A 490-amino-acid chain; its full sequence is tRNA-2-methylthio-N(6)-dimethylallyladenosine synthase (490 aa).

Positions 37 to 154 (KKVYIATQGC…LPELYDKSTT (118 aa)) constitute an MTTase N-terminal domain. [4Fe-4S] cluster-binding residues include C46, C83, C117, C198, C202, and C205. In terms of domain architecture, Radical SAM core spans 184–416 (KVEGYRAFVS…QKVIRDSTLK (233 aa)). The region spanning 419–487 (EEMVGKTLRV…PHMVRGELVD (69 aa)) is the TRAM domain.

Belongs to the methylthiotransferase family. MiaB subfamily. Monomer. It depends on [4Fe-4S] cluster as a cofactor.

Its subcellular location is the cytoplasm. The enzyme catalyses N(6)-dimethylallyladenosine(37) in tRNA + (sulfur carrier)-SH + AH2 + 2 S-adenosyl-L-methionine = 2-methylsulfanyl-N(6)-dimethylallyladenosine(37) in tRNA + (sulfur carrier)-H + 5'-deoxyadenosine + L-methionine + A + S-adenosyl-L-homocysteine + 2 H(+). Its function is as follows. Catalyzes the methylthiolation of N6-(dimethylallyl)adenosine (i(6)A), leading to the formation of 2-methylthio-N6-(dimethylallyl)adenosine (ms(2)i(6)A) at position 37 in tRNAs that read codons beginning with uridine. The sequence is that of tRNA-2-methylthio-N(6)-dimethylallyladenosine synthase from Psychrobacter sp. (strain PRwf-1).